The sequence spans 530 residues: Probable serine/threonine-protein kinase fnkB (530 aa).

Residues 11–268 enclose the Protein kinase domain; sequence WEIVETLKSN…SITLIDHPFL (258 aa). ATP-binding positions include 17–25 and Lys-43; that span reads LKSNVFKVN. Asp-131 acts as the Proton acceptor in catalysis.

This sequence belongs to the protein kinase superfamily. STE Ser/Thr protein kinase family. Mg(2+) is required as a cofactor.

The enzyme catalyses L-seryl-[protein] + ATP = O-phospho-L-seryl-[protein] + ADP + H(+). It catalyses the reaction L-threonyl-[protein] + ATP = O-phospho-L-threonyl-[protein] + ADP + H(+). This is Probable serine/threonine-protein kinase fnkB from Dictyostelium discoideum (Social amoeba).